The primary structure comprises 405 residues: Obg-like ATPase homolog (405 aa).

The OBG-type G domain occupies 17–283 (PTSGIVGLAN…CKGIASEYFD (267 aa)). Residues 26 to 31 (NVGKST) and V231 each bind ATP. Residues 312 to 398 (NLISFFTCGP…QDNDIALFKA (87 aa)) form the TGS domain.

It belongs to the TRAFAC class OBG-HflX-like GTPase superfamily. OBG GTPase family.

It localises to the mitochondrion. Hydrolyzes ATP, and can also hydrolyze GTP with lower efficiency. Has lower affinity for GTP. This chain is Obg-like ATPase homolog (YLF2), found in Saccharomyces cerevisiae (strain ATCC 204508 / S288c) (Baker's yeast).